The chain runs to 182 residues: Oligoribonuclease (182 aa).

Residues 8 to 171 (LLWLDMEMTG…ADIYESIDEL (164 aa)) form the Exonuclease domain. Residue Tyr129 is part of the active site.

The protein belongs to the oligoribonuclease family.

It is found in the cytoplasm. Functionally, 3'-to-5' exoribonuclease specific for small oligoribonucleotides. The sequence is that of Oligoribonuclease from Thiobacillus denitrificans (strain ATCC 25259 / T1).